We begin with the raw amino-acid sequence, 960 residues long: Probable glutamyl endopeptidase, chloroplastic (960 aa).

Residues 1-62 (MMRFHKACHR…FSENPLTTVM (62 aa)) constitute a chloroplast transit peptide. A disordered region spans residues 78–98 (SGGAEDGGGTSNGSLSASATA). Residues 89-98 (NGSLSASATA) are compositionally biased toward polar residues. Catalysis depends on charge relay system residues Ser-780, Asp-854, and His-888. Residues 915–960 (TSDADTSPDQSKEGSDSADKVSTGTGGGNPEFGEHEVHSKLRRSLL) are disordered. Residues 924-933 (QSKEGSDSAD) are compositionally biased toward basic and acidic residues.

Belongs to the peptidase S9D family.

It is found in the plastid. The protein resides in the chloroplast stroma. In terms of biological role, serine-type protease active in vitro against the LHCII N-terminal. Cleaves its substrate on the carboxy-side of Glu residues. The polypeptide is Probable glutamyl endopeptidase, chloroplastic (GEP) (Arabidopsis thaliana (Mouse-ear cress)).